The following is a 392-amino-acid chain: Pyoverdine export membrane fusion protein PvdR (392 aa).

Positions 1-36 form a signal peptide, tat-type signal; sequence MRRSTHTRRRLLLGGLGLLGLGSLLAWTSLPFGAQP. Residues 109–181 are a coiled coil; the sequence is IDNLKAQLAE…NASLRSDEAE (73 aa). The segment at 267 to 286 is disordered; it reads PPKPLDQTSQGGGSPASATA.

It belongs to the membrane fusion protein (MFP) (TC 8.A.1) family. In terms of assembly, part of the tripartite efflux system PvdRT-OpmQ, which is composed of an inner membrane component with both ATPase and permease domains, PvdT, a periplasmic membrane fusion protein, PvdR, and an outer membrane component, OpmQ. In terms of processing, predicted to be exported by the Tat system. The position of the signal peptide cleavage has not been experimentally proven.

The protein resides in the periplasm. Functionally, part of the tripartite efflux system PvdRT-OpmQ required for the secretion into the extracellular milieu of the siderophore pyoverdine (PVD), which is involved in iron acquisition. This subunit is an adapter protein that stimulates the ATPase activity of PvdT and connects the inner and outer membrane components. The system is responsible for export of newly synthesized PVD after the final steps of biosynthesis have taken place in the periplasm. It is also responsible for recycling of PVD after internalization of ferri-PVD into the periplasm by the outer-membrane receptor FpvA and release of iron from PVD, thus making PVD available for new cycles of iron uptake. Contributes to resistance against ampicillin. The polypeptide is Pyoverdine export membrane fusion protein PvdR (Pseudomonas putida (strain ATCC 47054 / DSM 6125 / CFBP 8728 / NCIMB 11950 / KT2440)).